The chain runs to 852 residues: Mannosyl-oligosaccharide glucosidase GCS1 (852 aa).

Residues 1 to 31 are disordered; the sequence is MTGASRRSARGRIKSSSLSPGSDEGSAYPPS. Residues 1–51 are Cytoplasmic-facing; sequence MTGASRRSARGRIKSSSLSPGSDEGSAYPPSIRRGKGKELVSIGAFKTNLK. An Endoplasmic reticulum targeting motif is present at residues 6–12; sequence RRSARGR. Over residues 15–26 the composition is skewed to low complexity; the sequence is SSSLSPGSDEGS. Residues 52–72 form a helical; Signal-anchor for type II membrane protein membrane-spanning segment; sequence ILVGLIILGIIVIYFVINRLV. The Lumenal portion of the chain corresponds to 73-852; it reads RHGLLFDESQ…LIMSEDYPIF (780 aa). The required for endoplasmic reticulum targeting stretch occupies residues 91–150; it reads PAPKVMDLSMFQGEHKESLYWGTYRPHVYFGVRARTPLSLVAGLMWLGVKDEMYVMRHFC. Residues asparagine 282, asparagine 552, and asparagine 570 are each glycosylated (N-linked (GlcNAc...) asparagine). Polar residues predominate over residues 574-583; it reads QELNPKTLSS. The tract at residues 574–593 is disordered; the sequence is QELNPKTLSSGLDDYPRASH. Aspartate 586 (proton donor) is an active-site residue. Asparagine 633, asparagine 662, and asparagine 730 each carry an N-linked (GlcNAc...) asparagine glycan. Catalysis depends on glutamate 819, which acts as the Proton acceptor.

This sequence belongs to the glycosyl hydrolase 63 family. As to expression, constitutively expressed in roots, stems, leaves, flowers and siliques.

It localises to the endoplasmic reticulum membrane. It catalyses the reaction N(4)-(alpha-D-Glc-(1-&gt;2)-alpha-D-Glc-(1-&gt;3)-alpha-D-Glc-(1-&gt;3)-alpha-D-Man-(1-&gt;2)-alpha-D-Man-(1-&gt;2)-alpha-D-Man-(1-&gt;3)-[alpha-D-Man-(1-&gt;2)-alpha-D-Man-(1-&gt;3)-[alpha-D-Man-(1-&gt;2)-alpha-D-Man-(1-&gt;6)]-alpha-D-Man-(1-&gt;6)]-beta-D-Man-(1-&gt;4)-beta-D-GlcNAc-(1-&gt;4)-beta-D-GlcNAc)-L-asparaginyl-[protein] + H2O = N(4)-(alpha-D-Glc-(1-&gt;3)-alpha-D-Glc-(1-&gt;3)-alpha-D-Man-(1-&gt;2)-alpha-D-Man-(1-&gt;2)-alpha-D-Man-(1-&gt;3)-[alpha-D-Man-(1-&gt;2)-alpha-D-Man-(1-&gt;3)-[alpha-D-Man-(1-&gt;2)-alpha-D-Man-(1-&gt;6)]-alpha-D-Man-(1-&gt;6)]-beta-D-Man-(1-&gt;4)-beta-D-GlcNAc-(1-&gt;4)-beta-D-GlcNAc)-L-asparaginyl-[protein] + beta-D-glucose. The protein operates within glycan metabolism; N-glycan degradation. Functionally, cleaves the distal alpha 1,2-linked glucose residue from the Glc(3)Man(9)GlcNAc(2) oligosaccharide precursor. Required for the accumulation of seed storage proteins, the formation of protein bodies, cell differentiation, cellulose biosynthesis and organization (in cell walls), cell shape determination and organization (e.g. epidermal cells), and embryo development. Involved in root development. The chain is Mannosyl-oligosaccharide glucosidase GCS1 (GCS1) from Arabidopsis thaliana (Mouse-ear cress).